A 140-amino-acid polypeptide reads, in one-letter code: ATP synthase epsilon chain (140 aa).

This sequence belongs to the ATPase epsilon chain family. In terms of assembly, F-type ATPases have 2 components, CF(1) - the catalytic core - and CF(0) - the membrane proton channel. CF(1) has five subunits: alpha(3), beta(3), gamma(1), delta(1), epsilon(1). CF(0) has three main subunits: a, b and c.

The protein resides in the cell inner membrane. Functionally, produces ATP from ADP in the presence of a proton gradient across the membrane. The sequence is that of ATP synthase epsilon chain from Bordetella bronchiseptica (strain ATCC BAA-588 / NCTC 13252 / RB50) (Alcaligenes bronchisepticus).